The following is a 471-amino-acid chain: Steroid C26-monooxygenase (471 aa).

G238 is a substrate binding site. C412 contributes to the heme binding site.

It belongs to the cytochrome P450 family. Heme is required as a cofactor.

The catalysed reaction is cholest-4-en-3-one + 6 reduced [2Fe-2S]-[ferredoxin] + 3 O2 + 5 H(+) = (25S)-3-oxocholest-4-en-26-oate + 6 oxidized [2Fe-2S]-[ferredoxin] + 4 H2O. Its function is as follows. Involved in the utilization of cholesterol as the sole carbon and energy source by degrading the side chain. Primarily catalyzes the sequential oxidation of the terminal methyl of cholest-4-en-3-one into (25S)-26-hydroxycholest-4-en-3-one (alcohol), (25S)-26-oxocholest-4-en-3-one (aldehyde), to finally yield the carboxylic acid (25S)-3-oxocholest-4-en-26-oate. Also able to sequentially oxidize cholesterol itself, not only cholest-4-en-3-one. This is Steroid C26-monooxygenase (cyp125) from Rhodococcus jostii (strain RHA1).